Here is a 379-residue protein sequence, read N- to C-terminus: Alanine racemase (379 aa).

The active-site Proton acceptor; specific for D-alanine is Lys37. Lys37 carries the post-translational modification N6-(pyridoxal phosphate)lysine. Arg137 is a substrate binding site. Tyr269 functions as the Proton acceptor; specific for L-alanine in the catalytic mechanism. Met317 contributes to the substrate binding site.

The protein belongs to the alanine racemase family. It depends on pyridoxal 5'-phosphate as a cofactor.

It catalyses the reaction L-alanine = D-alanine. The protein operates within amino-acid biosynthesis; D-alanine biosynthesis; D-alanine from L-alanine: step 1/1. Catalyzes the interconversion of L-alanine and D-alanine. May also act on other amino acids. The chain is Alanine racemase (alr) from Geobacter sp. (strain M21).